The primary structure comprises 312 residues: MEDIIKTLPQHTCSFLKQRFTLYKYQDVWNHQEFLEGRMLSEQTFKAHPNDVFLASYPKSGTTWLKALAFAIITREKFDDSTSPLLTTMPHDCIPLLEKDLEKIQENQRNSLYTPISTHFHYKSLPESARTSNCKIVYIYRNMKDVIVSYYHFLRQIVKLSVEEAPFEEAVDEFCQGISSCGPYWEHILGYWKASLEKPEIFLFLKYEDMKKDPVPSVKKLADFIGHPFTPKEEEAGVIENIIKLCSFEKLSSLEVNKSGMHRPEEAHSIENRLYFRKGKDGDWKNYFTDEMIEKIDKLIDEKLGATGLVLK.

59–64 (KSGTTW) lines the 3'-phosphoadenylyl sulfate pocket. H119 functions as the Proton acceptor in the catalytic mechanism. 3'-phosphoadenylyl sulfate is bound by residues R141, S149, Y207, and 277-279 (RKG).

Belongs to the sulfotransferase 1 family. As to expression, highest in shoot tips and lowest in mature leaves and roots.

It is found in the cytoplasm. Its function is as follows. Sulfotransferase that utilizes 3'-phospho-5'-adenylyl sulfate (PAPS) as sulfonate donor to catalyze the sulfate conjugation of quercetin, rhamnetin and isorhamnetin but not kaempferol. O-sulfation of position 3 of flavonol. May play a role in auxin transport. The polypeptide is Flavonol 3-sulfotransferase (Flaveria bidentis (Coastal plain yellowtops)).